We begin with the raw amino-acid sequence, 424 residues long: Testican-2 (424 aa).

The first 22 residues, 1–22, serve as a signal peptide directing secretion; sequence MRAPGCGRLVLPLLLLAAAALA. A Phosphoserine; by FAM20C modification is found at Ser72. 5 cysteine pairs are disulfide-bonded: Cys90–Cys101, Cys95–Cys111, Cys136–Cys166, Cys139–Cys159, and Cys148–Cys180. The Kazal-like domain occupies 130–182; the sequence is GNKDSICKPCHMAQLASVCGSDGHTYSSVCKLEQQACLSSKQLAVRCEGPCPC. N-linked (GlcNAc...) asparagine glycosylation occurs at Asn225. One can recognise a Thyroglobulin type-1 domain in the interval 310 to 376; it reads KPPCLAELER…GTRTHGSPDC (67 aa). 3 cysteine pairs are disulfide-bonded: Cys313–Cys337, Cys348–Cys355, and Cys357–Cys376. O-linked (Xyl...) (glycosaminoglycan) serine glycosylation is found at Ser383 and Ser388. A disordered region spans residues 387 to 424; it reads GSGVGWEDEEEKETEEAGEEAEEEEGEAGEADDGGYIW. Residues 392 to 424 show a composition bias toward acidic residues; the sequence is WEDEEEKETEEAGEEAEEEEGEAGEADDGGYIW.

Post-translationally, contains chondroitin sulfate and heparan sulfate O-linked oligosaccharides. In terms of tissue distribution, highly expressed in brain. Also found in lung and testis.

It localises to the secreted. Its subcellular location is the extracellular space. The protein localises to the extracellular matrix. Its function is as follows. May participate in diverse steps of neurogenesis. Binds calcium. The sequence is that of Testican-2 (SPOCK2) from Homo sapiens (Human).